The primary structure comprises 474 residues: Phenylalanine--tRNA ligase alpha subunit (474 aa).

L-phenylalanine is bound by residues threonine 317, 356–358, and tyrosine 396; that span reads QLE. Glutamate 398 lines the Mg(2+) pocket. Position 421 (phenylalanine 421) interacts with L-phenylalanine.

This sequence belongs to the class-II aminoacyl-tRNA synthetase family. Phe-tRNA synthetase alpha subunit type 2 subfamily. In terms of assembly, tetramer of two alpha and two beta subunits. Mg(2+) serves as cofactor.

Its subcellular location is the cytoplasm. It catalyses the reaction tRNA(Phe) + L-phenylalanine + ATP = L-phenylalanyl-tRNA(Phe) + AMP + diphosphate + H(+). This is Phenylalanine--tRNA ligase alpha subunit from Methanocorpusculum labreanum (strain ATCC 43576 / DSM 4855 / Z).